The sequence spans 99 residues: Ubiquitin-related modifier 1 (99 aa).

Glycine 99 is modified (1-thioglycine). Glycine 99 participates in a covalent cross-link: Glycyl lysine isopeptide (Gly-Lys) (interchain with K-? in acceptor proteins).

It belongs to the URM1 family. As to quaternary structure, homodimer; homodimerization may provide an autoprotection to the highly active C-terminal residue before attacking its substrates. Interacts with NCS2 and NCS6. Forms a conjugate with the target protein AHP1. C-terminal thiocarboxylation occurs in 2 steps, it is first acyl-adenylated (-COAMP) via the hesA/moeB/thiF part of UBA4, then thiocarboxylated (-COSH) via the rhodanese domain of UBA4.

It is found in the cytoplasm. It localises to the nucleus. It functions in the pathway tRNA modification; 5-methoxycarbonylmethyl-2-thiouridine-tRNA biosynthesis. Its function is as follows. Acts as a sulfur carrier required for 2-thiolation of mcm(5)S(2)U at tRNA wobble positions of cytosolic tRNA(Lys), tRNA(Glu) and tRNA(Gln). Serves as sulfur donor in tRNA 2-thiolation reaction by being thiocarboxylated (-COSH) at its C-terminus by the MOCS3 homolog UBA4. The sulfur is then transferred to tRNA to form 2-thiolation of mcm(5)S(2)U. Prior mcm(5) tRNA modification by the elongator complex is required for 2-thiolation. Also acts as a ubiquitin-like protein (UBL) that is covalently conjugated via an isopeptide bond to lysine residues of target proteins such as AHP1. The thiocarboxylated form serves as substrate for conjugation and oxidative stress specifically induces the formation of UBL-protein conjugates. The sequence is that of Ubiquitin-related modifier 1 from Saccharomyces cerevisiae (strain RM11-1a) (Baker's yeast).